The primary structure comprises 307 residues: Ribosomal RNA small subunit methyltransferase H (307 aa).

S-adenosyl-L-methionine contacts are provided by residues 32–34, aspartate 52, phenylalanine 78, aspartate 99, and glutamine 106; that span reads GGH.

It belongs to the methyltransferase superfamily. RsmH family.

The protein localises to the cytoplasm. The enzyme catalyses cytidine(1402) in 16S rRNA + S-adenosyl-L-methionine = N(4)-methylcytidine(1402) in 16S rRNA + S-adenosyl-L-homocysteine + H(+). Its function is as follows. Specifically methylates the N4 position of cytidine in position 1402 (C1402) of 16S rRNA. The sequence is that of Ribosomal RNA small subunit methyltransferase H from Acinetobacter baumannii (strain SDF).